The following is a 734-amino-acid chain: Photosystem I P700 chlorophyll a apoprotein A2 (734 aa).

8 helical membrane-spanning segments follow: residues 46 to 69 (IFAS…FHVA), 135 to 158 (LYAG…LHLQ), 175 to 199 (LNHH…HVAI), 273 to 291 (IAHH…GHMY), 330 to 353 (LHFQ…QHMY), 369 to 395 (SALY…IFFV), 417 to 439 (AIIS…IYVH), and 517 to 535 (FLIH…LILV). [4Fe-4S] cluster-binding residues include C559 and C568. The next 2 membrane-spanning stretches (helical) occupy residues 575–596 (AFYL…YWHW) and 643–665 (LSVW…MFLI). 3 residues coordinate chlorophyll a: H654, M662, and Y670. Phylloquinone is bound at residue W671. The chain crosses the membrane as a helical span at residues 707 to 727 (LVGLIHFTAGYIFTYAAFVIA).

This sequence belongs to the PsaA/PsaB family. The PsaA/B heterodimer binds the P700 chlorophyll special pair and subsequent electron acceptors. PSI consists of a core antenna complex that captures photons, and an electron transfer chain that converts photonic excitation into a charge separation. The eukaryotic PSI reaction center is composed of at least 11 subunits. The cofactor is P700 is a chlorophyll a/chlorophyll a' dimer, A0 is one or more chlorophyll a, A1 is one or both phylloquinones and FX is a shared 4Fe-4S iron-sulfur center..

Its subcellular location is the plastid. The protein resides in the chloroplast thylakoid membrane. It catalyses the reaction reduced [plastocyanin] + hnu + oxidized [2Fe-2S]-[ferredoxin] = oxidized [plastocyanin] + reduced [2Fe-2S]-[ferredoxin]. In terms of biological role, psaA and PsaB bind P700, the primary electron donor of photosystem I (PSI), as well as the electron acceptors A0, A1 and FX. PSI is a plastocyanin/cytochrome c6-ferredoxin oxidoreductase, converting photonic excitation into a charge separation, which transfers an electron from the donor P700 chlorophyll pair to the spectroscopically characterized acceptors A0, A1, FX, FA and FB in turn. Oxidized P700 is reduced on the lumenal side of the thylakoid membrane by plastocyanin or cytochrome c6. This chain is Photosystem I P700 chlorophyll a apoprotein A2, found in Rhodomonas salina (Cryptomonas salina).